We begin with the raw amino-acid sequence, 264 residues long: 3-methyl-2-oxobutanoate hydroxymethyltransferase (264 aa).

Residues D45 and D84 each contribute to the Mg(2+) site. Residues 45–46 (DS), D84, and K112 each bind 3-methyl-2-oxobutanoate. E114 provides a ligand contact to Mg(2+). The Proton acceptor role is filled by E181.

The protein belongs to the PanB family. Homodecamer; pentamer of dimers. It depends on Mg(2+) as a cofactor.

It localises to the cytoplasm. It carries out the reaction 3-methyl-2-oxobutanoate + (6R)-5,10-methylene-5,6,7,8-tetrahydrofolate + H2O = 2-dehydropantoate + (6S)-5,6,7,8-tetrahydrofolate. It functions in the pathway cofactor biosynthesis; (R)-pantothenate biosynthesis; (R)-pantoate from 3-methyl-2-oxobutanoate: step 1/2. Catalyzes the reversible reaction in which hydroxymethyl group from 5,10-methylenetetrahydrofolate is transferred onto alpha-ketoisovalerate to form ketopantoate. The chain is 3-methyl-2-oxobutanoate hydroxymethyltransferase from Shewanella amazonensis (strain ATCC BAA-1098 / SB2B).